Reading from the N-terminus, the 455-residue chain is Retinoic acid receptor beta (455 aa).

The tract at residues 1 to 87 is modulating; it reads MTTSGHACPV…PLPPPRVYKP (87 aa). The interval 47–78 is disordered; that stretch reads HPPPSGCSTPSPATIETQSTSSEELVPSPPSP. A compositionally biased stretch (polar residues) spans 53 to 66; it reads CSTPSPATIETQST. At serine 77 the chain carries Phosphoserine. 2 NR C4-type zinc fingers span residues 88 to 108 and 124 to 148; these read CFVC…CEGC and CHRD…LQKC. The nuclear receptor DNA-binding region spans 88–153; it reads CFVCQDKSSG…RLQKCFEVGM (66 aa). Positions 154-182 are hinge; it reads SKESVRNDRNKKKKETSKQECTESYEMTA. The NR LBD domain maps to 183–417; it reads ELDDLTEKIR…PLIQEMLENS (235 aa). The interval 415 to 455 is disordered; that stretch reads ENSEGHEPLTPSSSGNTAEHSPSISPSSVENSGVSQSPLVQ. Positions 424–434 are enriched in polar residues; it reads TPSSSGNTAEH. Over residues 435–455 the composition is skewed to low complexity; that stretch reads SPSISPSSVENSGVSQSPLVQ.

The protein belongs to the nuclear hormone receptor family. NR1 subfamily. As to quaternary structure, homodimer. Heterodimer; with a RXR molecule. Binds DNA preferentially as a RAR/RXR heterodimer. Heterodimerizes (via NR LBD) with RXRA. Interacts weakly with NCOR2. In terms of tissue distribution, expressed in aortic endothelial cells (at protein level).

The protein resides in the nucleus. Its subcellular location is the cytoplasm. Receptor for retinoic acid. Retinoic acid receptors bind as heterodimers to their target response elements in response to their ligands, all-trans or 9-cis retinoic acid, and regulate gene expression in various biological processes. The RXR/RAR heterodimers bind to the retinoic acid response elements (RARE) composed of tandem 5'-AGGTCA-3' sites known as DR1-DR5. In the absence or presence of hormone ligand, acts mainly as an activator of gene expression due to weak binding to corepressors. The RXRA/RARB heterodimer can act as a repressor on the DR1 element and as an activator on the DR5 element. In concert with RARG, required for skeletal growth, matrix homeostasis and growth plate function. The polypeptide is Retinoic acid receptor beta (RARB) (Homo sapiens (Human)).